Here is a 404-residue protein sequence, read N- to C-terminus: Acyl-[acyl-carrier-protein] desaturase 7, chloroplastic (404 aa).

The transit peptide at 1–39 directs the protein to the chloroplast; sequence MAASATTSTLAVTMFGYPNRNCHLKPPATATLRFWRSAA. Fe cation is bound by residues glutamate 138, glutamate 176, histidine 179, glutamate 229, glutamate 262, and histidine 265.

It belongs to the fatty acid desaturase type 2 family. In terms of assembly, homodimer. It depends on Fe(2+) as a cofactor.

The protein localises to the plastid. It is found in the chloroplast. It participates in lipid metabolism; fatty acid metabolism. In terms of biological role, introduces a cis double bond in the acyl chain of an acyl-[acyl-carrier protein]. This Oryza sativa subsp. indica (Rice) protein is Acyl-[acyl-carrier-protein] desaturase 7, chloroplastic.